Here is a 102-residue protein sequence, read N- to C-terminus: Large ribosomal subunit protein uL23 (102 aa).

It belongs to the universal ribosomal protein uL23 family. As to quaternary structure, part of the 50S ribosomal subunit. Contacts protein L29, and trigger factor when it is bound to the ribosome.

In terms of biological role, one of the early assembly proteins it binds 23S rRNA. One of the proteins that surrounds the polypeptide exit tunnel on the outside of the ribosome. Forms the main docking site for trigger factor binding to the ribosome. In Paramagnetospirillum magneticum (strain ATCC 700264 / AMB-1) (Magnetospirillum magneticum), this protein is Large ribosomal subunit protein uL23.